The primary structure comprises 862 residues: DNA mismatch repair protein MutS (862 aa).

Gly-608–Ser-615 contacts ATP.

This sequence belongs to the DNA mismatch repair MutS family.

This protein is involved in the repair of mismatches in DNA. It is possible that it carries out the mismatch recognition step. This protein has a weak ATPase activity. The sequence is that of DNA mismatch repair protein MutS from Bacteroides fragilis (strain YCH46).